A 343-amino-acid chain; its full sequence is MFGGAKGGHFGVPPAGYSGAVPQSEAGTKAGPAGGRPADTMWRVRCKAKGGTHLLQGLSSRTRLRELQGQIAAITGIAPGSQRILVGYPPECLDLSDRDITLGDLPIQSGDMLIVEEDQTRPKASPAFSKYGAPSYVREALPVLTRTAVPADNSCLFTSVYYVVEGGVLNPACAPEMRRLIAQIVASDPVLYSEAILGKTNEDYCDWIRRDDTWGGAIEISILSKFYQCEICVVDTQTVRIDRFGEDAGYTKRVLLIYDGIHYDPLQRNFPDPDTPPLTIFSSNDDIVLVQALELADEARRKRQFTDVNRFTLRCMICQKGLTGQAEARDHARETGHTNFGEV.

Positions 45–123 are UBX-like; that stretch reads RCKAKGGTHL…IVEEDQTRPK (79 aa). The region spanning 144–269 is the OTU domain; that stretch reads LTRTAVPADN…GIHYDPLQRN (126 aa). The tract at residues 149–155 is cys-loop; sequence VPADNSC. Residue Asp152 is part of the active site. The active-site Nucleophile is Cys155. The segment at 208-218 is variable-loop; sequence IRRDDTWGGAI. Residues 258–262 are his-loop; that stretch reads YDGIH. Ile261 provides a ligand contact to substrate. Residue His262 is part of the active site. An S2 site region spans residues 286–291; the sequence is DIVLVQ. The C2H2-type zinc-finger motif lies at 313–337; that stretch reads LRCMICQKGLTGQAEARDHARETGH. His337 is an active-site residue.

In terms of assembly, interacts with VCP; the interaction is direct. Interacts with FAF2/UBXD8. Interacts with DERL1; however interaction is dependent on the UBAX-like region, suggesting that it may be indirect. Interacts with PLAA, UBXN6 and VCP; may form a complex involved in macroautophagy.

The protein localises to the cytoplasm. The enzyme catalyses Thiol-dependent hydrolysis of ester, thioester, amide, peptide and isopeptide bonds formed by the C-terminal Gly of ubiquitin (a 76-residue protein attached to proteins as an intracellular targeting signal).. Hydrolase that can remove conjugated ubiquitin from proteins and participates in endoplasmic reticulum-associated degradation (ERAD) for misfolded lumenal proteins. May act by triming the ubiquitin chain on the associated substrate to facilitate their threading through the VCP/p97 pore. Ubiquitin moieties on substrates may present a steric impediment to the threading process when the substrate is transferred to the VCP pore and threaded through VCP's axial channel. Mediates deubiquitination of 'Lys-27'-, 'Lys-29'- and 'Lys-33'-linked polyubiquitin chains. Also able to hydrolyze 'Lys-11'-linked ubiquitin chains. Cleaves both polyubiquitin and di-ubiquitin. May play a role in macroautophagy, regulating for instance the clearance of damaged lysosomes. May recruit PLAA, UBXN6 and VCP to damaged lysosome membranes decorated with K48-linked ubiquitin chains and remove these chains allowing autophagosome formation. The polypeptide is Ubiquitin thioesterase OTU1 (Yod1) (Mus musculus (Mouse)).